The primary structure comprises 336 residues: Speedy protein E1 (336 aa).

Residues 16–50 (GVDPSPPCRSLGWKRKREWSDESEEEPEKELAPEP) are disordered. The segment covering 36–50 (DESEEEPEKELAPEP) has biased composition (acidic residues).

It belongs to the Speedy/Ringo family. Predominantly expressed in testis and heart.

The sequence is that of Speedy protein E1 from Homo sapiens (Human).